The sequence spans 156 residues: Ribonuclease H (156 aa).

One can recognise an RNase H type-1 domain in the interval 1–142; the sequence is MNKQVEIFTD…CDELARQAAE (142 aa). Mg(2+)-binding residues include Asp10, Glu48, Asp70, and Asp134. A disordered region spans residues 135-156; it reads ELARQAAENPTEDDIGYQPEPQ.

It belongs to the RNase H family. As to quaternary structure, monomer. Mg(2+) serves as cofactor.

The protein localises to the cytoplasm. The catalysed reaction is Endonucleolytic cleavage to 5'-phosphomonoester.. Its function is as follows. Endonuclease that specifically degrades the RNA of RNA-DNA hybrids. The chain is Ribonuclease H from Vibrio cholerae serotype O1 (strain M66-2).